The sequence spans 219 residues: Ribosome hibernation promotion factor (219 aa).

The protein belongs to the HPF/YfiA ribosome-associated protein family. Long HPF subfamily. Interacts with 100S ribosomes.

The protein resides in the cytoplasm. Its function is as follows. Required for dimerization of active 70S ribosomes into 100S ribosomes in stationary phase; 100S ribosomes are translationally inactive and sometimes present during exponential growth. The protein is Ribosome hibernation promotion factor of Mycobacterium tuberculosis (strain ATCC 25618 / H37Rv).